Here is a 357-residue protein sequence, read N- to C-terminus: Aspartate-semialdehyde dehydrogenase (357 aa).

NADP(+)-binding residues include Thr-12, Gly-13, Thr-14, Val-15, Ser-37, Ser-40, Leu-84, and Asp-85. Cys-151 (acyl-thioester intermediate) is an active-site residue. Residue Gly-183 participates in NADP(+) binding. Catalysis depends on His-247, which acts as the Proton acceptor. At Ser-323 the chain carries Phosphoserine. Asn-335 lines the NADP(+) pocket.

This sequence belongs to the aspartate-semialdehyde dehydrogenase family.

The protein localises to the cytoplasm. It is found in the cytosol. Its subcellular location is the nucleus. It catalyses the reaction L-aspartate 4-semialdehyde + phosphate + NADP(+) = 4-phospho-L-aspartate + NADPH + H(+). It participates in amino-acid biosynthesis; L-methionine biosynthesis via de novo pathway; L-homoserine from L-aspartate: step 2/3. Its pathway is amino-acid biosynthesis; L-threonine biosynthesis; L-threonine from L-aspartate: step 2/5. Functionally, catalyzes the NADPH-dependent formation of L-aspartate 4-semialdehyde (L-ASA) by the reductive dephosphorylation of 4-phospho-L-aspartate. Mediates the second step in the biosynthesis of amino acids that derive from aspartate (the aspartate family of amino acids), including methioinine and threonine, the latter of which is a precursor to isoleucine. In Schizosaccharomyces pombe (strain 972 / ATCC 24843) (Fission yeast), this protein is Aspartate-semialdehyde dehydrogenase.